Reading from the N-terminus, the 158-residue chain is Large ribosomal subunit protein uL18 (158 aa).

This sequence belongs to the universal ribosomal protein uL18 family. As to quaternary structure, part of the 50S ribosomal subunit. Contacts the 5S and 23S rRNAs.

Functionally, this is one of the proteins that bind and probably mediate the attachment of the 5S RNA into the large ribosomal subunit, where it forms part of the central protuberance. In Picrophilus torridus (strain ATCC 700027 / DSM 9790 / JCM 10055 / NBRC 100828 / KAW 2/3), this protein is Large ribosomal subunit protein uL18.